The following is a 257-amino-acid chain: 3-deoxy-manno-octulosonate cytidylyltransferase (257 aa).

Belongs to the KdsB family.

Its subcellular location is the cytoplasm. It catalyses the reaction 3-deoxy-alpha-D-manno-oct-2-ulosonate + CTP = CMP-3-deoxy-beta-D-manno-octulosonate + diphosphate. The protein operates within nucleotide-sugar biosynthesis; CMP-3-deoxy-D-manno-octulosonate biosynthesis; CMP-3-deoxy-D-manno-octulosonate from 3-deoxy-D-manno-octulosonate and CTP: step 1/1. It participates in bacterial outer membrane biogenesis; lipopolysaccharide biosynthesis. Its function is as follows. Activates KDO (a required 8-carbon sugar) for incorporation into bacterial lipopolysaccharide in Gram-negative bacteria. The polypeptide is 3-deoxy-manno-octulosonate cytidylyltransferase (Xylella fastidiosa (strain M23)).